A 348-amino-acid chain; its full sequence is Lipoyl synthase (348 aa).

Residues C55, C60, C66, C81, C85, C88, and S292 each contribute to the [4Fe-4S] cluster site. The Radical SAM core domain maps to 67 to 281; it reads WESREATFLI…SDEAYEIGFA (215 aa).

The protein belongs to the radical SAM superfamily. Lipoyl synthase family. It depends on [4Fe-4S] cluster as a cofactor.

The protein localises to the cytoplasm. It catalyses the reaction [[Fe-S] cluster scaffold protein carrying a second [4Fe-4S](2+) cluster] + N(6)-octanoyl-L-lysyl-[protein] + 2 oxidized [2Fe-2S]-[ferredoxin] + 2 S-adenosyl-L-methionine + 4 H(+) = [[Fe-S] cluster scaffold protein] + N(6)-[(R)-dihydrolipoyl]-L-lysyl-[protein] + 4 Fe(3+) + 2 hydrogen sulfide + 2 5'-deoxyadenosine + 2 L-methionine + 2 reduced [2Fe-2S]-[ferredoxin]. It functions in the pathway protein modification; protein lipoylation via endogenous pathway; protein N(6)-(lipoyl)lysine from octanoyl-[acyl-carrier-protein]: step 2/2. Catalyzes the radical-mediated insertion of two sulfur atoms into the C-6 and C-8 positions of the octanoyl moiety bound to the lipoyl domains of lipoate-dependent enzymes, thereby converting the octanoylated domains into lipoylated derivatives. The sequence is that of Lipoyl synthase from Corynebacterium efficiens (strain DSM 44549 / YS-314 / AJ 12310 / JCM 11189 / NBRC 100395).